The primary structure comprises 527 residues: Matrix metalloproteinase-19 (527 aa).

The signal sequence occupies residues 1–18; the sequence is MDWQQLWLAFLLPMTVSG. Positions 19 to 98 are excised as a propeptide; the sequence is RALGPTEKEA…EDPFNQKSLK (80 aa). Positions 84-91 match the Cysteine switch motif; the sequence is PRCGLEDP. Cysteine 86 is a binding site for Zn(2+). N-linked (GlcNAc...) asparagine glycosylation is present at asparagine 109. Histidine 213 provides a ligand contact to Zn(2+). Glutamate 214 is an active-site residue. Zn(2+) contacts are provided by histidine 217 and histidine 223. Hemopexin repeat units follow at residues 286 to 333, 334 to 372, 377 to 425, and 426 to 471; these read PNPC…WEGL, PGNL…FPMK, EPNL…FTGV, and PDRP…WMHC. Cysteine 289 and cysteine 471 are joined by a disulfide. 2 N-linked (GlcNAc...) asparagine glycosylation sites follow: asparagine 464 and asparagine 479. The interval 473–500 is disordered; that stretch reads SQTPDTNSSTGDVTPSTTDTVLGTTPST. Aspartate 512 carries GPI-anchor amidated aspartate lipidation. Residues 513–527 constitute a propeptide, removed in mature form; that stretch reads SASLSFSANVTLLGA. A glycan (N-linked (GlcNAc...) asparagine) is linked at asparagine 521.

It belongs to the peptidase M10A family. The cofactor is Zn(2+). Ca(2+) serves as cofactor. Post-translationally, activated by autolytic cleavage after Lys-98. In terms of processing, tyrosine phosphorylated by PKDCC/VLK. Highly expressed in the liver. Expressed in the arterial tunica media of large blood vessels.

It is found in the cell membrane. The protein resides in the secreted. The protein localises to the extracellular space. Its subcellular location is the extracellular matrix. In terms of biological role, endopeptidase that degrades various components of the extracellular matrix, such as aggrecan and cartilage oligomeric matrix protein (comp), during development, haemostasis and pathological conditions (arthritic disease). May also play a role in neovascularization or angiogenesis. Hydrolyzes collagen type IV, laminin, nidogen, nascin-C isoform, fibronectin, and type I gelatin. The sequence is that of Matrix metalloproteinase-19 (Mmp19) from Mus musculus (Mouse).